The chain runs to 80 residues: uncharacterized protein (80 aa).

The signal sequence occupies residues 1-20 (MVAADHRALGSNKSYPASQT). The tract at residues 1 to 21 (MVAADHRALGSNKSYPASQTA) is disordered. Positions 11-21 (SNKSYPASQTA) are enriched in polar residues.

This is an uncharacterized protein from Mycobacterium tuberculosis (strain CDC 1551 / Oshkosh).